The sequence spans 152 residues: 3-dehydroquinate dehydratase (152 aa).

The active-site Proton acceptor is the Tyr26. The substrate site is built by Asn77, His83, and Asp90. His103 functions as the Proton donor in the catalytic mechanism. Residues Leu104 to Ser105 and Arg114 contribute to the substrate site.

Belongs to the type-II 3-dehydroquinase family. As to quaternary structure, homododecamer.

It carries out the reaction 3-dehydroquinate = 3-dehydroshikimate + H2O. Its pathway is metabolic intermediate biosynthesis; chorismate biosynthesis; chorismate from D-erythrose 4-phosphate and phosphoenolpyruvate: step 3/7. Its function is as follows. Catalyzes a trans-dehydration via an enolate intermediate. This is 3-dehydroquinate dehydratase (aroQ) from Synechocystis sp. (strain ATCC 27184 / PCC 6803 / Kazusa).